The chain runs to 1727 residues: DNA-directed RNA polymerase II subunit rpb1 (1727 aa).

Cys-66, Cys-69, Cys-76, His-79, Cys-106, Cys-109, Cys-147, and Cys-175 together coordinate Zn(2+). Positions 486, 488, and 490 each coordinate Mg(2+). The bridging helix stretch occupies residues 819-831; the sequence is PQEFFFHAMGGRE. Lys-1266 participates in a covalent cross-link: Glycyl lysine isopeptide (Lys-Gly) (interchain with G-Cter in ubiquitin). 2 disordered regions span residues 1478–1512 and 1551–1727; these read EPSN…YDAP and PTYS…NKKK. The segment covering 1480–1505 has biased composition (polar residues); the sequence is SNVSYPDTPGSQTPSYSYGDGSTTPF. A run of 23 repeats spans residues 1553–1559, 1560–1566, 1567–1573, 1574–1580, 1581–1587, 1588–1594, 1595–1601, 1602–1608, 1609–1615, 1616–1622, 1623–1629, 1630–1636, 1637–1643, 1644–1650, 1651–1657, 1658–1664, 1665–1671, 1672–1678, 1679–1685, 1686–1692, 1693–1699, 1700–1706, and 1707–1713. The tract at residues 1553-1713 is C-terminal domain (CTD); 23 X 7 AA tandem repeats of Y-S-P-[ST]-S-P-[FST]; it reads YSPTSPSYSP…SPSYSPSSPT (161 aa).

The protein belongs to the RNA polymerase beta' chain family. Component of the RNA polymerase II (Pol II) complex consisting of 12 subunits. In terms of processing, the tandem heptapeptide repeats in the C-terminal domain (CTD) can be highly phosphorylated. The phosphorylation activates Pol II. Phosphorylation occurs mainly at residues 'Ser-2' and 'Ser-5' of the heptapeptide repeat. The phosphorylation state is believed to result from the balanced action of site-specific CTD kinases and phosphatase, and a 'CTD code' that specifies the position of Pol II within the transcription cycle has been proposed. Following transcription stress, the elongating form of RNA polymerase II (RNA pol IIo) is polyubiquitinated via 'Lys-63'-linkages on Lys-1266 at DNA damage sites without leading to degradation: ubiquitination promotes RNA pol IIo backtracking to allow access by the transcription-coupled nucleotide excision repair (TC-NER) machinery. Subsequent DEF1-dependent polyubiquitination by the elongin complex via 'Lys-48'-linkages may lead to proteasome-mediated degradation; presumably at stalled RNA pol II where TC-NER has failed, to halt global transcription and enable 'last resort' DNA repair pathways.

The protein resides in the nucleus. It catalyses the reaction RNA(n) + a ribonucleoside 5'-triphosphate = RNA(n+1) + diphosphate. Functionally, DNA-dependent RNA polymerase catalyzes the transcription of DNA into RNA using the four ribonucleoside triphosphates as substrates. Largest and catalytic component of RNA polymerase II which synthesizes mRNA precursors and many functional non-coding RNAs. Forms the polymerase active center together with the second largest subunit. Pol II is the central component of the basal RNA polymerase II transcription machinery. It is composed of mobile elements that move relative to each other. RPB1 is part of the core element with the central large cleft, the clamp element that moves to open and close the cleft and the jaws that are thought to grab the incoming DNA template. At the start of transcription, a single-stranded DNA template strand of the promoter is positioned within the central active site cleft of Pol II. A bridging helix emanates from RPB1 and crosses the cleft near the catalytic site and is thought to promote translocation of Pol II by acting as a ratchet that moves the RNA-DNA hybrid through the active site by switching from straight to bent conformations at each step of nucleotide addition. During transcription elongation, Pol II moves on the template as the transcript elongates. Elongation is influenced by the phosphorylation status of the C-terminal domain (CTD) of Pol II largest subunit (RPB1), which serves as a platform for assembly of factors that regulate transcription initiation, elongation, termination and mRNA processing. In Dictyostelium discoideum (Social amoeba), this protein is DNA-directed RNA polymerase II subunit rpb1 (polr2a).